The chain runs to 739 residues: Glycine--tRNA ligase (739 aa).

The transit peptide at 1-36 (MPSPRPVLLRGARAALLLLLPPRLLARPSLLLRRSL) directs the protein to the mitochondrion. Ser-35 is modified (phosphoserine). The 57-residue stretch at 63 to 119 (VLAPLRLAVRQQGDLVRKLKEDKAPQVDVDKAVAELKARKRVLEAKELALQPKDDIV) folds into the WHEP-TRS domain. Lys-204 carries the post-translational modification N6-acetyllysine. Residue Glu-299 participates in glycine binding. Residues 331 to 333 (RNE) and 342 to 343 (RV) each bind ATP. Glycine is bound at residue Glu-350. Residue Tyr-453 is modified to Phosphotyrosine. 457–458 (EI) contributes to the ATP binding site. Lys-501 bears the N6-acetyllysine mark. 576–578 (EPS) contributes to the glycine binding site. Residue Arg-583 participates in ATP binding. Ser-700 is subject to Phosphoserine. Thr-736 bears the Phosphothreonine mark.

This sequence belongs to the class-II aminoacyl-tRNA synthetase family. As to quaternary structure, homodimer. In terms of tissue distribution, widely expressed, including in brain and spinal cord. As to expression, expressed in brain, spinal cord, muscle, heart and spleen. Expressed in brain, spinal cord, muscle, heart, spleen and liver.

The protein localises to the cytoplasm. The protein resides in the cell projection. Its subcellular location is the axon. It is found in the secreted. It localises to the extracellular exosome. The protein localises to the mitochondrion. The enzyme catalyses tRNA(Gly) + glycine + ATP = glycyl-tRNA(Gly) + AMP + diphosphate. It catalyses the reaction 2 ATP + H(+) = P(1),P(4)-bis(5'-adenosyl) tetraphosphate + diphosphate. Its activity is regulated as follows. Ap4A synthesis is inhibited by tRNA, via the disruption of the second ATP-binding site by direct blocking and/or by tRNA-induced conformational change. Functionally, catalyzes the ATP-dependent ligation of glycine to the 3'-end of its cognate tRNA, via the formation of an aminoacyl-adenylate intermediate (Gly-AMP). Also produces diadenosine tetraphosphate (Ap4A), a universal pleiotropic signaling molecule needed for cell regulation pathways, by direct condensation of 2 ATPs. Thereby, may play a special role in Ap4A homeostasis. This Homo sapiens (Human) protein is Glycine--tRNA ligase.